Here is a 330-residue protein sequence, read N- to C-terminus: Nodulation protein D 2 (330 aa).

The HTH lysR-type domain maps to 6–63 (LDLNLLVALDALITERNLSSAARKINLSQPAMSAAVARLRKHFRDELFGMRGRELVLS). Positions 23–42 (LSSAARKINLSQPAMSAAVA) form a DNA-binding region, H-T-H motif. The interval 308 to 330 (RVTSSPEDAEPPGHFVRSVSPLP) is disordered.

Belongs to the LysR transcriptional regulatory family.

NodD regulates the expression of the nodABCFE genes which encode other nodulation proteins. NodD is also a negative regulator of its own expression. Binds flavonoids as inducers. The polypeptide is Nodulation protein D 2 (nodD2) (Bradyrhizobium diazoefficiens (strain JCM 10833 / BCRC 13528 / IAM 13628 / NBRC 14792 / USDA 110)).